Reading from the N-terminus, the 467-residue chain is Asparagine--tRNA ligase (467 aa).

The protein belongs to the class-II aminoacyl-tRNA synthetase family. Homodimer.

It is found in the cytoplasm. It catalyses the reaction tRNA(Asn) + L-asparagine + ATP = L-asparaginyl-tRNA(Asn) + AMP + diphosphate + H(+). This chain is Asparagine--tRNA ligase, found in Histophilus somni (strain 2336) (Haemophilus somnus).